Reading from the N-terminus, the 685-residue chain is Hemocyanin subunit X (685 aa).

A signal peptide spans 1 to 20; the sequence is MKYCTESLILILAVIGCISA. Cu cation-binding residues include H210, H214, and H243. N329 carries an N-linked (GlcNAc...) asparagine glycan. Cu cation-binding residues include H367, H371, and H407. A disulfide bridge connects residues C577 and C625.

The protein belongs to the tyrosinase family. Hemocyanin subfamily.

It localises to the secreted. The protein localises to the extracellular space. In terms of biological role, hemocyanins are copper-containing oxygen carriers occurring freely dissolved in the hemolymph of many mollusks and arthropods. The protein is Hemocyanin subunit X (HCX) of Scutigera coleoptrata (House centipede).